Reading from the N-terminus, the 122-residue chain is Large ribosomal subunit protein uL14 (122 aa).

The protein belongs to the universal ribosomal protein uL14 family. In terms of assembly, part of the 50S ribosomal subunit. Forms a cluster with proteins L3 and L19. In the 70S ribosome, L14 and L19 interact and together make contacts with the 16S rRNA in bridges B5 and B8.

Its function is as follows. Binds to 23S rRNA. Forms part of two intersubunit bridges in the 70S ribosome. This chain is Large ribosomal subunit protein uL14, found in Azorhizobium caulinodans (strain ATCC 43989 / DSM 5975 / JCM 20966 / LMG 6465 / NBRC 14845 / NCIMB 13405 / ORS 571).